A 58-amino-acid chain; its full sequence is Large ribosomal subunit protein uL30 (58 aa).

The protein belongs to the universal ribosomal protein uL30 family. Part of the 50S ribosomal subunit.

The chain is Large ribosomal subunit protein uL30 from Pseudomonas savastanoi pv. phaseolicola (strain 1448A / Race 6) (Pseudomonas syringae pv. phaseolicola (strain 1448A / Race 6)).